The chain runs to 246 residues: E3 ubiquitin ligase TRIM40 (246 aa).

An RING-type zinc finger spans residues 12 to 55; sequence CPICLDPLKEAVSTDCRHLFCRMCLTQHMDKASVSGILSCPVCR. The segment at 64-105 adopts a B box-type zinc-finger fold; it reads GDNYICHTHQKRVRRFCEASGHLLCEECLQSPEHQSHTELSI. 4 residues coordinate Zn(2+): cysteine 69, histidine 72, cysteine 91, and histidine 97. The stretch at 105 to 170 forms a coiled coil; that stretch reads IENAISHYKE…DQTKEQLKAL (66 aa).

This sequence belongs to the TRIM/RBCC family. Interacts with NEDD8.

The catalysed reaction is S-ubiquitinyl-[E2 ubiquitin-conjugating enzyme]-L-cysteine + [acceptor protein]-L-lysine = [E2 ubiquitin-conjugating enzyme]-L-cysteine + N(6)-ubiquitinyl-[acceptor protein]-L-lysine.. E3 ubiquitin-protein ligase that plays a role in the limitation of the innate immune response. Mediates inhibition of the RLR signaling pathway by ubiquitinating RIGI and IFIH1 receptors, leading to their proteasomal degradation. Also promotes the neddylation of IKBKG/NEMO, stabilizing NFKBIA, and thereby inhibiting of NF-kappa-B nuclear translocation and activation. The sequence is that of E3 ubiquitin ligase TRIM40 (Trim40) from Mus musculus (Mouse).